The sequence spans 555 residues: Dihydroxy-acid dehydratase (555 aa).

Position 46 (C46) interacts with [2Fe-2S] cluster. D78 serves as a coordination point for Mg(2+). A [2Fe-2S] cluster-binding site is contributed by C119. Residues D120 and K121 each coordinate Mg(2+). K121 is modified (N6-carboxylysine). C191 is a [2Fe-2S] cluster binding site. E442 serves as a coordination point for Mg(2+). S468 serves as the catalytic Proton acceptor.

The protein belongs to the IlvD/Edd family. Homodimer. It depends on [2Fe-2S] cluster as a cofactor. Mg(2+) is required as a cofactor.

It catalyses the reaction (2R)-2,3-dihydroxy-3-methylbutanoate = 3-methyl-2-oxobutanoate + H2O. The enzyme catalyses (2R,3R)-2,3-dihydroxy-3-methylpentanoate = (S)-3-methyl-2-oxopentanoate + H2O. The protein operates within amino-acid biosynthesis; L-isoleucine biosynthesis; L-isoleucine from 2-oxobutanoate: step 3/4. Its pathway is amino-acid biosynthesis; L-valine biosynthesis; L-valine from pyruvate: step 3/4. Functionally, functions in the biosynthesis of branched-chain amino acids. Catalyzes the dehydration of (2R,3R)-2,3-dihydroxy-3-methylpentanoate (2,3-dihydroxy-3-methylvalerate) into 2-oxo-3-methylpentanoate (2-oxo-3-methylvalerate) and of (2R)-2,3-dihydroxy-3-methylbutanoate (2,3-dihydroxyisovalerate) into 2-oxo-3-methylbutanoate (2-oxoisovalerate), the penultimate precursor to L-isoleucine and L-valine, respectively. The sequence is that of Dihydroxy-acid dehydratase from Thermus thermophilus (strain ATCC 27634 / DSM 579 / HB8).